An 86-amino-acid polypeptide reads, in one-letter code: Small ribosomal subunit protein uS15 (86 aa).

Belongs to the universal ribosomal protein uS15 family. In terms of assembly, part of the 30S ribosomal subunit. Forms a bridge to the 50S subunit in the 70S ribosome, contacting the 23S rRNA.

Its function is as follows. One of the primary rRNA binding proteins, it binds directly to 16S rRNA where it helps nucleate assembly of the platform of the 30S subunit by binding and bridging several RNA helices of the 16S rRNA. Forms an intersubunit bridge (bridge B4) with the 23S rRNA of the 50S subunit in the ribosome. In Vesicomyosocius okutanii subsp. Calyptogena okutanii (strain HA), this protein is Small ribosomal subunit protein uS15.